A 134-amino-acid chain; its full sequence is Profilin-3 (134 aa).

An intrachain disulfide couples cysteine 13 to cysteine 118. The Involved in PIP2 interaction motif lies at 84 to 100 (AVIRGKKGSGGITIKKT). Position 114 is a phosphothreonine (threonine 114).

The protein belongs to the profilin family. Occurs in many kinds of cells as a complex with monomeric actin in a 1:1 ratio. Post-translationally, phosphorylated by MAP kinases.

It localises to the cytoplasm. The protein resides in the cytoskeleton. Its function is as follows. Binds to actin and affects the structure of the cytoskeleton. At high concentrations, profilin prevents the polymerization of actin, whereas it enhances it at low concentrations. This Olea europaea (Common olive) protein is Profilin-3.